Consider the following 548-residue polypeptide: Sesquiterpene synthase 9 (548 aa).

Mg(2+) contacts are provided by D300, D304, and E453. The DDXXD motif signature appears at 300–304 (DDTFD).

The protein belongs to the terpene synthase family. Tpsa subfamily. The cofactor is Mg(2+). It depends on Mn(2+) as a cofactor. Mostly expressed in stem and trichomes, to a lower extent in roots, leaves and flowers and, at low levels, in fruits.

Its subcellular location is the cytoplasm. It carries out the reaction (2E,6E)-farnesyl diphosphate = germacrene C + diphosphate. The catalysed reaction is (2E)-geranyl diphosphate = terpinolene + diphosphate. It catalyses the reaction (2E)-geranyl diphosphate = limonene + diphosphate. The enzyme catalyses (2E)-geranyl diphosphate = beta-myrcene + diphosphate. It carries out the reaction (2Z,6Z)-farnesyl diphosphate = germacrene C + diphosphate. The protein operates within secondary metabolite biosynthesis; terpenoid biosynthesis. Functionally, involved in the biosynthesis of germacrene C, one of the most abundant sesquiterpene in the leaf oil of tomato. Produces mainly germacrene C, but also smaller amounts of germacrene A, B and D when used with farnesyl diphosphate (FPP) as substrate; able to use both (2E,6E)-farnesyl diphosphate ((EE)-FPP) and (2Z,6Z)-farnesyl diphosphate ((ZZ)-FPP). No or low activity with geranylgeranyl diphosphate (GGPP). Can act with a low efficiency as a monoterpene synthase with geranyl diphosphate (GPP) as substrate, thus producing beta-myrcene, limonene and terpinolene. The chain is Sesquiterpene synthase 9 from Solanum lycopersicum (Tomato).